The sequence spans 42 residues: Perlinhibin-related protein (42 aa).

Contains four disulfide bonds.

In terms of biological role, inhibitor of shell growth. In Haliotis laevigata (Smooth Australian abalone), this protein is Perlinhibin-related protein.